A 77-amino-acid chain; its full sequence is Acyl carrier protein (77 aa).

Positions serine 2–glutamine 77 constitute a Carrier domain. Serine 37 carries the O-(pantetheine 4'-phosphoryl)serine modification.

It belongs to the acyl carrier protein (ACP) family. 4'-phosphopantetheine is transferred from CoA to a specific serine of apo-ACP by AcpS. This modification is essential for activity because fatty acids are bound in thioester linkage to the sulfhydryl of the prosthetic group.

The protein resides in the cytoplasm. The protein operates within lipid metabolism; fatty acid biosynthesis. In terms of biological role, carrier of the growing fatty acid chain in fatty acid biosynthesis. This Leucothrix mucor protein is Acyl carrier protein.